Here is a 198-residue protein sequence, read N- to C-terminus: Acireductone dioxygenase (198 aa).

H97, H99, E103, and H141 together coordinate Fe(2+). Ni(2+)-binding residues include H97, H99, E103, and H141.

It belongs to the acireductone dioxygenase (ARD) family. In terms of assembly, monomer. The cofactor is Fe(2+). It depends on Ni(2+) as a cofactor.

It carries out the reaction 1,2-dihydroxy-5-(methylsulfanyl)pent-1-en-3-one + O2 = 3-(methylsulfanyl)propanoate + CO + formate + 2 H(+). The catalysed reaction is 1,2-dihydroxy-5-(methylsulfanyl)pent-1-en-3-one + O2 = 4-methylsulfanyl-2-oxobutanoate + formate + 2 H(+). Its pathway is amino-acid biosynthesis; L-methionine biosynthesis via salvage pathway; L-methionine from S-methyl-5-thio-alpha-D-ribose 1-phosphate: step 5/6. Catalyzes 2 different reactions between oxygen and the acireductone 1,2-dihydroxy-3-keto-5-methylthiopentene (DHK-MTPene) depending upon the metal bound in the active site. Fe-containing acireductone dioxygenase (Fe-ARD) produces formate and 2-keto-4-methylthiobutyrate (KMTB), the alpha-ketoacid precursor of methionine in the methionine recycle pathway. Ni-containing acireductone dioxygenase (Ni-ARD) produces methylthiopropionate, carbon monoxide and formate, and does not lie on the methionine recycle pathway. The protein is Acireductone dioxygenase of Synechococcus elongatus (strain ATCC 33912 / PCC 7942 / FACHB-805) (Anacystis nidulans R2).